The following is a 377-amino-acid chain: Queuine tRNA-ribosyltransferase (377 aa).

The Proton acceptor role is filled by Asp-89. Substrate is bound by residues 89-93 (DSGGF), Asp-143, Gln-188, and Gly-215. The interval 246–252 (GVGKPED) is RNA binding. Catalysis depends on Asp-265, which acts as the Nucleophile. Residues 270-274 (TRNAR) form an RNA binding; important for wobble base 34 recognition region. The Zn(2+) site is built by Cys-303, Cys-305, Cys-308, and His-334.

This sequence belongs to the queuine tRNA-ribosyltransferase family. Homodimer. Within each dimer, one monomer is responsible for RNA recognition and catalysis, while the other monomer binds to the replacement base PreQ1. It depends on Zn(2+) as a cofactor.

It carries out the reaction 7-aminomethyl-7-carbaguanine + guanosine(34) in tRNA = 7-aminomethyl-7-carbaguanosine(34) in tRNA + guanine. Its pathway is tRNA modification; tRNA-queuosine biosynthesis. Catalyzes the base-exchange of a guanine (G) residue with the queuine precursor 7-aminomethyl-7-deazaguanine (PreQ1) at position 34 (anticodon wobble position) in tRNAs with GU(N) anticodons (tRNA-Asp, -Asn, -His and -Tyr). Catalysis occurs through a double-displacement mechanism. The nucleophile active site attacks the C1' of nucleotide 34 to detach the guanine base from the RNA, forming a covalent enzyme-RNA intermediate. The proton acceptor active site deprotonates the incoming PreQ1, allowing a nucleophilic attack on the C1' of the ribose to form the product. After dissociation, two additional enzymatic reactions on the tRNA convert PreQ1 to queuine (Q), resulting in the hypermodified nucleoside queuosine (7-(((4,5-cis-dihydroxy-2-cyclopenten-1-yl)amino)methyl)-7-deazaguanosine). This chain is Queuine tRNA-ribosyltransferase, found in Acinetobacter baumannii (strain ACICU).